We begin with the raw amino-acid sequence, 58 residues long: Small ribosomal subunit protein bS21C (58 aa).

Positions 38–58 (YEKPSLRRKRKAEAARKGGRY) are disordered. Basic and acidic residues predominate over residues 49 to 58 (AEAARKGGRY).

It belongs to the bacterial ribosomal protein bS21 family.

This Nostoc sp. (strain PCC 7120 / SAG 25.82 / UTEX 2576) protein is Small ribosomal subunit protein bS21C (rpsU3).